Here is a 406-residue protein sequence, read N- to C-terminus: Dihydroorotase, mitochondrial (406 aa).

Residues 1 to 41 (MQTAATSTFFANPHVKHLPGPFLRPSPHYGALVHLPSFRNK) constitute a mitochondrion transit peptide. Positions 69, 71, 155, 193, 231, and 305 each coordinate Zn(2+). K155 is modified (N6-carboxylysine).

This sequence belongs to the metallo-dependent hydrolases superfamily. DHOase family. Class II DHOase subfamily. The cofactor is Zn(2+).

Its subcellular location is the mitochondrion. The enzyme catalyses (S)-dihydroorotate + H2O = N-carbamoyl-L-aspartate + H(+). The protein operates within pyrimidine metabolism; UMP biosynthesis via de novo pathway; (S)-dihydroorotate from bicarbonate: step 3/3. The sequence is that of Dihydroorotase, mitochondrial (PYRC) from Oryza sativa subsp. japonica (Rice).